The chain runs to 279 residues: Movement protein (279 aa).

It belongs to the cucumovirus movement protein family.

The protein resides in the host cell junction. It is found in the host plasmodesma. Functionally, transports viral genome to neighboring plant cells directly through plasmosdesmata, without any budding. The movement protein allows efficient cell to cell propagation, by bypassing the host cell wall barrier. Acts by forming a tubular structure at the host plasmodesmata, enlarging it enough to allow free passage of virion capsids. The protein is Movement protein of Cucumber mosaic virus (strain As) (CMV).